The chain runs to 393 residues: Chalcone synthase G (393 aa).

Cys164 is an active-site residue.

It belongs to the thiolase-like superfamily. Chalcone/stilbene synthases family. Expressed in seedlings after illumination with UV light. No expression detectable in flowers. It is not known for sure whether CHSG encodes a chalcone synthase or a very closely related condensing enzyme.

It catalyses the reaction (E)-4-coumaroyl-CoA + 3 malonyl-CoA + 3 H(+) = 2',4,4',6'-tetrahydroxychalcone + 3 CO2 + 4 CoA. It functions in the pathway secondary metabolite biosynthesis; flavonoid biosynthesis. The primary product of this enzyme is 4,2',4',6'-tetrahydroxychalcone (also termed naringenin-chalcone or chalcone) which can under specific conditions spontaneously isomerize into naringenin. The protein is Chalcone synthase G (CHSG) of Petunia hybrida (Petunia).